Reading from the N-terminus, the 745-residue chain is Protein transport protein SEC23 D (745 aa).

Cys53, Cys56, Cys73, and Cys76 together coordinate Zn(2+). Positions 53 to 76 (CENCYAYFNTYCELDQWAWNCSLC) are zinc finger-like.

Belongs to the SEC23/SEC24 family. SEC24 subfamily. In terms of assembly, component of the coat protein complex II (COPII), composed of at least five proteins: the Sec23/24 complex, the Sec13/31 complex and Sar1. In terms of tissue distribution, mostly expressed in closed floral bud, pollen and flowers, and, to a lower extent, in mature siliques, roots and leaf primordia.

It is found in the cytoplasmic vesicle. The protein localises to the COPII-coated vesicle membrane. The protein resides in the endoplasmic reticulum membrane. It localises to the membrane. Its function is as follows. Component of the coat protein complex II (COPII) which promotes the formation of transport vesicles from the endoplasmic reticulum (ER). The coat has two main functions, the physical deformation of the endoplasmic reticulum membrane into vesicles and the selection of cargo molecules. May contribute to COPII-coated vesicles formation and ER-Golgi vesicle transport. Together with SEC23A, essential for pollen wall development and exine patterning, probably by regulating endoplasmic reticulum (ER) export of lipids and proteins (e.g. sporopollenin) necessary for pollen wall formation. Also involved in plastid physiology in anther tapetal cells. The sequence is that of Protein transport protein SEC23 D from Arabidopsis thaliana (Mouse-ear cress).